The primary structure comprises 244 residues: NAD-dependent protein deacetylase (244 aa).

Positions 1 to 244 (MSATERQLQY…IGDTCRQLRA (244 aa)) constitute a Deacetylase sirtuin-type domain. NAD(+) contacts are provided by Ala27, Thr31, Phe38, Arg39, Gln107, Ile109, Asp110, and His125. Phe38 lines the nicotinamide pocket. 2 residues coordinate nicotinamide: Ile109 and Asp110. His125 functions as the Proton acceptor in the catalytic mechanism. Positions 133, 136, 153, and 156 each coordinate Zn(2+). Positions 192, 193, 217, and 235 each coordinate NAD(+).

Belongs to the sirtuin family. Class U subfamily. Zn(2+) serves as cofactor.

It is found in the cytoplasm. The catalysed reaction is N(6)-acetyl-L-lysyl-[protein] + NAD(+) + H2O = 2''-O-acetyl-ADP-D-ribose + nicotinamide + L-lysyl-[protein]. NAD-dependent protein deacetylase which modulates the activities of several enzymes which are inactive in their acetylated form. The chain is NAD-dependent protein deacetylase from Chromobacterium violaceum (strain ATCC 12472 / DSM 30191 / JCM 1249 / CCUG 213 / NBRC 12614 / NCIMB 9131 / NCTC 9757 / MK).